Reading from the N-terminus, the 335-residue chain is Malate dehydrogenase 1 (335 aa).

NAD(+)-binding positions include 11 to 16 and aspartate 35; that span reads GAGNVG. Arginine 97 and arginine 103 together coordinate substrate. Residues asparagine 110 and 133–135 contribute to the NAD(+) site; that span reads VTN. Residues asparagine 135 and arginine 166 each coordinate substrate. The Proton acceptor role is filled by histidine 190.

It belongs to the LDH/MDH superfamily. MDH type 3 family.

It catalyses the reaction (S)-malate + NAD(+) = oxaloacetate + NADH + H(+). In terms of biological role, catalyzes the reversible oxidation of malate to oxaloacetate. The chain is Malate dehydrogenase 1 (mdh1) from Aquifex aeolicus (strain VF5).